A 197-amino-acid polypeptide reads, in one-letter code: Phosphoheptose isomerase (197 aa).

Residues 36–197 form the SIS domain; sequence MVNALLNEGK…IDSQLFGSEE (162 aa). 51–53 serves as a coordination point for substrate; the sequence is NGG. Histidine 60 and glutamate 64 together coordinate Zn(2+). Substrate contacts are provided by residues glutamate 64, 93-94, 119-121, serine 124, and glutamine 174; these read ND and STS. Residues glutamine 174 and histidine 182 each contribute to the Zn(2+) site.

This sequence belongs to the SIS family. GmhA subfamily. In terms of assembly, homotetramer. Requires Zn(2+) as cofactor.

Its subcellular location is the cytoplasm. The enzyme catalyses 2 D-sedoheptulose 7-phosphate = D-glycero-alpha-D-manno-heptose 7-phosphate + D-glycero-beta-D-manno-heptose 7-phosphate. It participates in carbohydrate biosynthesis; D-glycero-D-manno-heptose 7-phosphate biosynthesis; D-glycero-alpha-D-manno-heptose 7-phosphate and D-glycero-beta-D-manno-heptose 7-phosphate from sedoheptulose 7-phosphate: step 1/1. Its function is as follows. Catalyzes the isomerization of sedoheptulose 7-phosphate in D-glycero-D-manno-heptose 7-phosphate. This Pseudomonas syringae pv. syringae (strain B728a) protein is Phosphoheptose isomerase.